The chain runs to 435 residues: Tektin-4 (435 aa).

Positions D60–S69 are enriched in basic and acidic residues. Residues D60–Q96 form a disordered region. Over residues Q70–Q85 the composition is skewed to low complexity. Coiled coils occupy residues K102 to R180, L310 to A336, and F363 to L411.

The protein belongs to the tektin family. In terms of assembly, microtubule inner protein component of sperm flagellar doublet microtubules. In terms of processing, ubiquitinated, leading to its degradation. Deubiquitinated by USP16, promoting its stability. Strongly expressed in spermatozoa. Also detected at low levels in pancreas. Expressed in airway epithelial cells.

It localises to the cytoplasm. It is found in the cytoskeleton. The protein resides in the cilium axoneme. The protein localises to the flagellum axoneme. Functionally, microtubule inner protein (MIP) part of the dynein-decorated doublet microtubules (DMTs) in cilia and flagellar axoneme. Forms filamentous polymers in the walls of ciliary and flagellar microtubules. Contributes to normal sperm motility. The sequence is that of Tektin-4 from Homo sapiens (Human).